Consider the following 468-residue polypeptide: Tapasin-related protein (468 aa).

Residues 1 to 18 (MGTQEGWCLLLCLALSGA) form the signal peptide. Residues 19–405 (AETKPHPAER…STQVVPPERR (387 aa)) lie on the Lumenal side of the membrane. The Ig-like V-type domain maps to 181–297 (PQGTVRTAVE…SLYRAQQIIQ (117 aa)). 2 cysteine pairs are disulfide-bonded: Cys212-Cys283 and Cys321-Cys382. An N-linked (GlcNAc...) asparagine glycan is attached at Asn265. The Ig-like C1-type domain occupies 304 to 394 (PKVRLSLANE…MHISLEEPLG (91 aa)). A helical membrane pass occupies residues 406 to 426 (TALGVIFASSLFLLALLFLGL). Topologically, residues 427–468 (QRRQAPTRVGLLQAERWKTTSCADTQSSHLHEDRTACVSQPS) are cytoplasmic.

Interacts with peptide-free HLA-A*02-B2M complexes or those loaded with low affinity peptides, likely facilitating peptide exchange onto higher affinity peptides. Interacts with MR1 in a ligand-independent way; this interaction may stabilize MR1 pool and facilitate ligand loading and dissociation.

It is found in the cell membrane. It localises to the endoplasmic reticulum membrane. The protein resides in the microsome membrane. Its subcellular location is the golgi apparatus membrane. Component of the antigen processing and presentation pathway, which binds to MHC class I coupled with beta2-microglobulin/B2M. Association between TAPBPR and MHC class I occurs in the absence of a functional peptide-loading complex (PLC). Expression seems to slow down and down-regulate MHC class I surface expression. The polypeptide is Tapasin-related protein (TAPBPL) (Pongo abelii (Sumatran orangutan)).